Reading from the N-terminus, the 612-residue chain is DEAD-box ATP-dependent RNA helicase 11 (612 aa).

Disordered stretches follow at residues 1–70 (MSAS…SGGG) and 83–104 (GAGG…WDRR). Residue serine 2 is modified to N-acetylserine. Gly residues-rich tracts occupy residues 61-70 (SGGGGASGGG) and 83-94 (GAGGGGGGGGGW). A Q motif motif is present at residues 151-179 (NTFADIDLGDALNLNIRRCKYVRPTPVQR). Residues 182 to 366 (IPILLAERDL…ADFMSNYIFL (185 aa)) enclose the Helicase ATP-binding domain. 195–202 (AQTGSGKT) lines the ATP pocket. The short motif at 310–313 (DEAD) is the DEAD box element. One can recognise a Helicase C-terminal domain in the interval 377–542 (LITQRVEFVQ…EVPEWLTRYA (166 aa)). The segment at 547-583 (FGGGKKRSGGRFGGRDFRREGSYSRGGGGGGGGGGSD) is disordered. Residues 559–568 (GGRDFRREGS) are compositionally biased toward basic and acidic residues. The span at 570–583 (SRGGGGGGGGGGSD) shows a compositional bias: gly residues.

It belongs to the DEAD box helicase family. DDX3/DED1 subfamily.

It catalyses the reaction ATP + H2O = ADP + phosphate + H(+). This is DEAD-box ATP-dependent RNA helicase 11 (RH11) from Arabidopsis thaliana (Mouse-ear cress).